The primary structure comprises 85 residues: MAKTQSPLQWLATTLIRGYQVFISPFLGANKCRFHPTCSTYAIEAIRLHGSVKGCWLAARRILKCHPLHPGGIDPVPPKTHRCNK.

The protein belongs to the UPF0161 family.

The protein localises to the cell inner membrane. Its function is as follows. Could be involved in insertion of integral membrane proteins into the membrane. The protein is Putative membrane protein insertion efficiency factor of Shewanella woodyi (strain ATCC 51908 / MS32).